Consider the following 661-residue polypeptide: MAAASTPPRAERKRXSWSRLPGAQRESAGLAKKCPFSLELAESGPPSSALYAPVSPPSAPEPAPPASPASPAPPAADQGPQPPVSLDPRVSIYSVRRPLLARTHIQGRVYNFLERPTGWKCFAYHFTVFLIVLVCLIFSVLSTIEQYATLATGTLFWMEIVLVVFFGTEYVVRLWSAGCRSKYVGLWGRLRFARKPISIIDLIVVVASMVVLCVGSKGQVFATSAIRGIRFLQILRMLHVDRQGGTWRLLGSVVFIHRQELITTLYIGFLGLIFSSYFVYLAEKDAVNESGRVEFGSYADALWWGVVTVTTIGYGDKVPQTWVGKTIASCFSVFAISFFALPAGILGSGFALKVQQKQRQKHFNRQIPAAASLIQTAWRCYAAENPDSATWKIYIRKPTRGHALLSPSPKPKKSAMVKKKKFKLDKDNGVSPGEKTLPVPQITCEPPEERRPDHFPVDSHDGSVRKSPALLEVSTPQFLRTNSFAEDLDLEGETLLAPITHVSQLREHHRATVKVIRRMQYFVAKKKFQQARKPYDVRDVIEQYSQGHLNLMVRIKELQRRLDQSIGKPSLFVPISEKSKDRGSNSIGARLNRVEDKVTQLDQRLVLIADMLQQLLALHQGRCHGGAHPAQARDGDPADPELFLPTYEQLTVPRRDPEEGS.

Disordered stretches follow at residues 1–29 and 42–88; these read MAAA…ESAG and ESGP…SLDP. Residues 1–119 lie on the Cytoplasmic side of the membrane; that stretch reads MAAASTPPRA…YNFLERPTGW (119 aa). Residue Ser27 is modified to Phosphoserine; by PKA. Residues 54 to 85 show a composition bias toward pro residues; the sequence is VSPPSAPEPAPPASPASPAPPAADQGPQPPVS. Residues 120 to 141 form a helical membrane-spanning segment; sequence KCFAYHFTVFLIVLVCLIFSVL. At 142–152 the chain is on the extracellular side; sequence STIEQYATLAT. Residues 153–175 form a helical membrane-spanning segment; sequence GTLFWMEIVLVVFFGTEYVVRLW. Over 176-191 the chain is Cytoplasmic; that stretch reads SAGCRSKYVGLWGRLR. A helical membrane pass occupies residues 192–217; the sequence is FARKPISIIDLIVVVASMVVLCVGSK. Residues 218–225 lie on the Extracellular side of the membrane; that stretch reads GQVFATSA. A helical; Voltage-sensor transmembrane segment spans residues 226–241; sequence IRGIRFLQILRMLHVD. The segment at 237-245 is interaction with KCNE3; it reads MLHVDRQGG. The Cytoplasmic segment spans residues 242-259; sequence RQGGTWRLLGSVVFIHRQ. A 1,2-diacyl-sn-glycero-3-phospho-(1D-myo-inositol-4,5-bisphosphate) is bound at residue Gln243. A helical membrane pass occupies residues 260 to 282; it reads ELITTLYIGFLGLIFSSYFVYLA. Topologically, residues 283–298 are extracellular; that stretch reads EKDAVNESGRVEFGSY. An N-linked (GlcNAc...) asparagine glycan is attached at Asn288. Residues 299–319 constitute an intramembrane region (pore-forming); that stretch reads ADALWWGVVTVTTIGYGDKVP. The Extracellular portion of the chain corresponds to 320-321; it reads QT. A helical transmembrane segment spans residues 322 to 347; it reads WVGKTIASCFSVFAISFFALPAGILG. Residues 348-661 lie on the Cytoplasmic side of the membrane; sequence SGFALKVQQK…VPRRDPEEGS (314 aa). Positions 369–381 are interaction with CALM; it reads AAASLIQTAWRCY. Residues Ser406 and Ser408 each carry the phosphoserine modification. Positions 514-528 are interaction with CALM; calcium-dependent; it reads KVIRRMQYFVAKKKF. The segment at 534-571 is interaction with KCNE1 C-terminus; that stretch reads PYDVRDVIEQYSQGHLNLMVRIKELQRRLDQSIGKPSL. The stretch at 584–620 forms a coiled coil; that stretch reads SNSIGARLNRVEDKVTQLDQRLVLIADMLQQLLALHQ. Positions 587–615 are interaction with AKAP9; the sequence is IGARLNRVEDKVTQLDQRLVLIADMLQQL. Positions 588 to 619 are C-terminal assembly domain (tetramerization); the sequence is GARLNRVEDKVTQLDQRLVLIADMLQQLLALH. A disordered region spans residues 624–661; that stretch reads HGGAHPAQARDGDPADPELFLPTYEQLTVPRRDPEEGS.

This sequence belongs to the potassium channel family. KQT (TC 1.A.1.15) subfamily. Kv7.1/KCNQ1 sub-subfamily. Tetramer. Heterotetramer with KCNE1; targets to the membrane raft. Interacts (via C-terminus) with CALM; forms a heterooctameric structure (with 4:4 KCNQ1:CALM stoichiometry) in a calcium-independent manner. Interacts with AKAP9; targets protein kinase A (PKA) catalytic and regulatory subunits and protein phosphatase 1 (PP1) to the KCNQ1-KCNE1 complex, allowing PKA-mediated phosphorylation and increase of delayed rectifier potassium channel activity. Interacts with KCNE2; form a heterooligomer complex that targets to the membrane raft and leading to currents with an apparently instantaneous activation, a rapid deactivation process and a linear current-voltage relationship and decreases the amplitude of the outward current. Interacts with AP2M1; mediates estrogen-induced internalization via clathrin-coated vesicles. Interacts with NEDD4L; promotes internalization and decreases I(Ks) currents. Interacts with USP2; counteracts the NEDD4L-specific down-regulation of I(Ks) and restore plasma membrane localization. Heterotetramer with KCNQ5; has a voltage-gated potassium channel activity. Interacts with KCNE3; four KCNE3 molecules are bound to one KCNQ1 tetramer (4:4 KCNQ1:KCNE3 stoichiometry); alters membrane raft localization; affects KCNQ1 structure and gating properties. Interacts with KCNE4; impairs KCNQ1 localization in lipid rafts and inhibits voltage-gated potassium channel activity. Interacts with KCNE5; impairs KCNQ1 localization in lipid rafts and only conducts current upon strong and continued depolarization. Interacts with SLC5A3; forms coregulatory channel-transporter complexes that modulate Na(+)-coupled myo-inositol influx through the transporter. Post-translationally, phosphorylation at Ser-27 by PKA; increases delayed rectifier potassium channel activity of the KCNQ1-KCNE1 complex through a macromolecular complex that includes PKA, PP1, and the targeting protein AKAP9. Ubiquitinated by NEDD4L; promotes internalization. The ubiquitinylated form is internalized through a clathrin-mediated endocytosis by interacting with AP2M1 and is recycled back to the cell membrane via RAB4A and RAB11A. In terms of processing, deubiquitinated by USP2; counteracts the NEDD4L-specific down-regulation of I(Ks) and restores the membrane localization.

The protein resides in the cell membrane. The protein localises to the cytoplasmic vesicle membrane. It localises to the early endosome. It is found in the membrane raft. Its subcellular location is the endoplasmic reticulum. The protein resides in the basolateral cell membrane. The protein localises to the apical cell membrane. The catalysed reaction is K(+)(in) = K(+)(out). With respect to regulation, PIP2 molecule is essential to activate KCNQ channels by inducing the coupling of the voltage-sensing domain (VSD) and the pore-forming domain (PD). Upon channel activation, PIP2 disrupts the VSD-calmodulin/CALM interactions, causing the release of CALM from the VSD which triggers the opening of the gate. Calcium potentiates KCNQ1 channel current through calcium-bound CALM. Calcium-bound CALM competes with PIP2 to stabilize the channel open state. Functionally, pore-forming subunit of the voltage-gated potassium (Kv) channel involved in the regulation of cardiomyocyte excitability and important in normal development and functions of myocardium, inner ear, stomach and colon. Associates with KCNE beta subunits that modulates current kinetics. Induces a voltage-dependent by rapidly activating and slowly deactivating potassium-selective outward current. Also promotes a delayed voltage activated potassium current showing outward rectification characteristic. During beta-adrenergic receptor stimulation participates in cardiac repolarization by associating with KCNE1 to form the I(Ks) cardiac potassium current that increases the amplitude and slows down the activation kinetics of outward potassium current I(Ks). Muscarinic agonist oxotremorine-M strongly suppresses KCNQ1/KCNE1 current. When associated with KCNE3, forms the potassium channel that is important for cyclic AMP-stimulated intestinal secretion of chloride ions. This interaction with KCNE3 is reduced by 17beta-estradiol, resulting in the reduction of currents. During conditions of increased substrate load, maintains the driving force for proximal tubular and intestinal sodium ions absorption, gastric acid secretion, and cAMP-induced jejunal chloride ions secretion. Allows the provision of potassium ions to the luminal membrane of the secretory canaliculus in the resting state as well as during stimulated acid secretion. When associated with KCNE2, forms a heterooligomer complex leading to currents with an apparently instantaneous activation, a rapid deactivation process and a linear current-voltage relationship and decreases the amplitude of the outward current. When associated with KCNE4, inhibits voltage-gated potassium channel activity. When associated with KCNE5, this complex only conducts current upon strong and continued depolarization. Also forms a heterotetramer with KCNQ5 that has a voltage-gated potassium channel activity. Binds with phosphatidylinositol 4,5-bisphosphate. KCNQ1-KCNE2 channel associates with Na(+)-coupled myo-inositol symporter in the apical membrane of choroid plexus epithelium and regulates the myo-inositol gradient between blood and cerebrospinal fluid with an impact on neuron excitability. The chain is Potassium voltage-gated channel subfamily KQT member 1 from Oryctolagus cuniculus (Rabbit).